Reading from the N-terminus, the 1622-residue chain is MPARTAPARVPALASPAGSLPDHVRRRLKDLERDGLTEKECVKEKLNLLHEFLQTEIKSQLCDLETKLHKEELSEEGYLAKVKTLLNKDLCLENGTLSLTQKANGCPANGSRPTWKAEMADSNRSPRSRPKPRGPRRSKSDSETMIEASSSSVATRRTTRQTTITSHFKGPAKRKPKEDSEKGNANESAAEERDQDKKRRVAGTESRASRAGESVEKPERVRPGTQLCQEEQGEQEDDRRPRRQTRELASRRKSREDPDREARPGTHLDVDDDDEKDKRSSRPRSQPRDLATKRRPKEEVEQITPEPPEGKDEDEREEKRRKTTRKKPEPLSIPVQSRVERKASQGKASAIPKLNPPQCPECGQYLDDPDLKYQQHPVDAVDEPQMLTNEALSVFDSNSSWFETYDSSPMHKFTFFSVYCSRGHLCPVDTGLIEKNVELYFSGVAKAIHEENPSVEGGVNGKNLGPINQWWISGFDGGEKALIGFSTAFAEYFLMEPSPEYAPIFGLMQEKIYISKIVVEFLQSNPDAVYEDLINKIETTVPPSAINVNRFTEDSLLRHAQFVVSQVESYDDAKDDDETPIFLSPCMRSLIHLAGVSLGQRRATRRTVINSAKVKRKGPTKATTTKLVYQIFDTFFSEQIEKDDKEDKENTMKRRRCGVCEVCQQPECGKCKACKDMVKFGGTGRSKQACLKRRCPNLAVKEADEDEEADDDIPELPSPKKLHQGKKKKQNKDRISWLGEPVKIEENRTYYWKVSIDEETLEVGDCVSVIPDDPSKPLYLARVTALWEDKNGQMFHAHWFCAGTDTVLGATSDPLELFLVGECENMQLSYIHSKVKVIYRGPSPNWAMEGGMDPEAMLPGAEDGKTYFYQFWYSQDYARFESPPKTQPAEDNKHKFCLSCIRLAELRQKEMPKVLEQLEEVDGRVYCSSITKNGVVYRLGDSVYLPPEAFTFNIKMASPMKRSKRDPVNENPVPRDTYRKYSDYIKGSNLDAPEPYRIGRIKEIYCGKKKGGKVNEADIKIRLYKFYRPENTHKSIQATYHADINLLYWSDEEAVVDFSDVQGRCTVEYGEDLLESIQDYSQGGPDRFYFLEAYNSKTKSFEDPPNHARSPGNKGKGKGKGKGKGKPQVSEPKEPEAAIKLPKLRTLDVFSGCGGLTEGFHQAGISETLWAIEMWEPAAQAFRLNNPGTTVFTEDCNVLLKLVMAGEVTNSLGQRLPQKGDVEMLCGGPPCQGFSGMNRFNSRTYSKFKNSLVVSFLSYCDYYRPRFFLLENVRNFVSFRRSMVLKLTLRCLVRMGYQCTFGVLQAGQYGVAQTRRRAIILAAAPGEKLPLFPEPLHVFAPRACQLSVVVDDKKFVSNITRLSSGPFRTITMRDTMSDLPEIQNGASAPEISYKWRATVLVPEAAARVALPAHPQGPYPQVHERAGGCRMRHIPLSPGSDWRDLPNIQVRLRDGVITNKLRYTFHDTKNGCSSTGALRGVCSCAEGKTCDPASRQFNTLIPWCLPHTGNRHNHWAGLYGRLEWDGFFSTTVTNPEPMGKQGRVLHPEQHRVVSVRECARSQGFPDTYRLFGNILDRHRQVGNAVPPPLAKAIGLEIKLCLLASAQESASAAVKGKEETTTED.

An interaction with DNMT3A region spans residues 1–145; the sequence is MPARTAPARV…RRSKSDSETM (145 aa). Interaction with the PRC2/EED-EZH2 complex regions lie at residues 1–342 and 304–610; these read MPAR…VERK and TPEP…TVIN. Residue Ser-15 is modified to Phosphoserine. Positions 16-109 constitute a DMAP1-binding domain; sequence PAGSLPDHVR…TQKANGCPAN (94 aa). At Lys-70 the chain carries N6,N6-dimethyllysine; by EHMT2. Residues 100–360 are disordered; sequence TQKANGCPAN…IPKLNPPQCP (261 aa). Residues 126-137 are compositionally biased toward basic residues; the sequence is PRSRPKPRGPRR. At Ser-138 the chain carries Phosphoserine. Position 139 is an N6-methyllysine; by SETD7 (Lys-139). At Ser-140 the chain carries Phosphoserine; by PKB/AKT1. The interaction with DNMT3B stretch occupies residues 146 to 213; that stretch reads IEASSSSVAT…TESRASRAGE (68 aa). A phosphoserine mark is found at Ser-149 and Ser-151. The span at 149-166 shows a compositional bias: low complexity; that stretch reads SSSSVATRRTTRQTTITS. At Thr-163 the chain carries Phosphothreonine. Lys-169 is subject to N6-acetyllysine. The Nuclear localization signal motif lies at 173 to 200; it reads KRKPKEDSEKGNANESAAEERDQDKKRR. 4 stretches are compositionally biased toward basic and acidic residues: residues 176–197, 207–222, 237–269, and 276–300; these read PKED…DQDK, RASR…ERVR, DDRR…THLD, and KDKR…KEEV. Thr-304 carries the post-translational modification Phosphothreonine. A DNA replication foci-targeting sequence region spans residues 327-556; it reads KPEPLSIPVQ…NVNRFTEDSL (230 aa). Cys-359 and Cys-362 together coordinate Zn(2+). The residue at position 372 (Lys-372) is an N6-acetyllysine. Ser-400 is modified (phosphoserine). Positions 420 and 424 each coordinate Zn(2+). Phosphoserine is present on residues Ser-515 and Ser-555. The segment at 650–696 adopts a CXXC-type zinc-finger fold; the sequence is NTMKRRRCGVCEVCQQPECGKCKACKDMVKFGGTGRSKQACLKRRCP. Zn(2+) contacts are provided by Cys-657, Cys-660, Cys-663, Cys-668, Cys-671, Cys-674, Cys-690, and Cys-695. The autoinhibitory linker stretch occupies residues 697-758; that stretch reads NLAVKEADED…TYYWKVSIDE (62 aa). The segment at 702–733 is disordered; it reads EADEDEEADDDIPELPSPKKLHQGKKKKQNKD. Residues 703 to 714 show a composition bias toward acidic residues; that stretch reads ADEDEEADDDIP. The residue at position 718 (Ser-718) is a Phosphoserine. Basic residues predominate over residues 720-731; that stretch reads KKLHQGKKKKQN. Position 736 is a phosphoserine (Ser-736). Lys-753 is modified (N6-acetyllysine). The BAH 1 domain maps to 759 to 884; sequence ETLEVGDCVS…QDYARFESPP (126 aa). Ser-882 carries the post-translational modification Phosphoserine. N6-acetyllysine is present on residues Lys-895, Lys-961, and Lys-980. The 129-residue stretch at 977 to 1105 folds into the BAH 2 domain; the sequence is TYRKYSDYIK…SKTKSFEDPP (129 aa). The interval 1099–1138 is disordered; the sequence is KSFEDPPNHARSPGNKGKGKGKGKGKGKPQVSEPKEPEAA. Repeat copies occupy residues 1114 to 1115, 1116 to 1117, 1118 to 1119, 1120 to 1121, 1122 to 1123, and 1124 to 1125. The interval 1114 to 1127 is 7 X 2 AA tandem repeats of K-G; it reads KGKGKGKGKGKGKP. The span at 1115-1125 shows a compositional bias: basic residues; the sequence is GKGKGKGKGKG. N6-acetyllysine is present on residues Lys-1116, Lys-1118, Lys-1120, Lys-1122, Lys-1124, and Lys-1126. One copy of the 7; approximate repeat lies at 1126–1127; sequence KP. The interval 1126–1622 is interaction with the PRC2/EED-EZH2 complex; that stretch reads KPQVSEPKEP…KGKEETTTED (497 aa). In terms of domain architecture, SAM-dependent MTase C5-type spans 1144–1603; the sequence is LRTLDVFSGC…LEIKLCLLAS (460 aa). The segment at 1144–1622 is catalytic; it reads LRTLDVFSGC…KGKEETTTED (479 aa). S-adenosyl-L-methionine-binding positions include Ser-1151, 1155-1156, 1173-1174, 1195-1196, and Cys-1196; these read GL, EM, and DC. Cys-1231 is an active-site residue. Lys-1354 is subject to N6-acetyllysine. Residue Ser-1436 is modified to Phosphoserine. Residues Asn-1582 and Val-1584 each coordinate S-adenosyl-L-methionine. Lys-1613 participates in a covalent cross-link: Glycyl lysine isopeptide (Lys-Gly) (interchain with G-Cter in SUMO2).

It belongs to the class I-like SAM-binding methyltransferase superfamily. C5-methyltransferase family. As to quaternary structure, homodimer. Forms a stable complex with E2F1, BB1 and HDAC1. Forms a complex with DMAP1 and HDAC2, with direct interaction. Interacts with the PRC2/EED-EZH2 complex. Probably part of a corepressor complex containing ZNF304, TRIM28, SETDB1 and DNMT1. Interacts with UHRF1; promoting its recruitment to hemimethylated DNA. Interacts with USP7, promoting its deubiquitination. Interacts with PCNA. Interacts with MBD2 and MBD3. Interacts with DNMT3A and DNMT3B. Interacts with UBC9. Interacts with CSNK1D. Interacts with HDAC1. Interacts with BAZ2A/TIP5. Interacts with SIRT7. Interacts with ZNF263; recruited to the SIX3 promoter along with other proteins involved in chromatin modification and transcriptional corepression where it contributes to transcriptional repression. Interacts with L3MBTL3 and DCAF5; the interaction requires DNMT1 methylation at Lys-139 and is necessary to target DNMT1 for ubiquitination by the CRL4-DCAF5 E3 ubiquitin ligase complex and proteasomal degradation. Interacts with PHF20L1; the interaction requires DNMT1 methylation at Lys-139 and protects DNMT1 from ubiquitination and proteasomal degradation. In terms of processing, sumoylated; sumoylation increases activity. Post-translationally, acetylation on multiple lysines, mainly by KAT2B/PCAF, regulates cell cycle G(2)/M transition. Deacetylation of Lys-1116 and Lys-1354 by SIRT1 increases methyltransferase activity. Phosphorylation of Ser-151 by CDKs is important for enzymatic activity and protein stability. Phosphorylation of Ser-140 by AKT1 prevents methylation by SETD7 thereby increasing DNMT1 stability. In terms of processing, methylation at Lys-139 by SETD7 is necessary for the regulation of DNMT1 proteasomal degradation. Post-translationally, ubiquitinated by UHRF1; interaction with USP7 counteracts ubiquitination by UHRF1 by promoting deubiquitination and preventing degradation by the proteasome. As to expression, isoforms 0 and 8 are highly expressed in placenta, brain, lung, spleen, kidney, heart, and at much lower levels in liver. Isoform 1 is expressed in cerebellum, isoform 2 in muscle and testis, isoform 3 in lung, isoform 4 in spleen and brain, and isoform 5 in brain.

Its subcellular location is the nucleus. The catalysed reaction is a 2'-deoxycytidine in DNA + S-adenosyl-L-methionine = a 5-methyl-2'-deoxycytidine in DNA + S-adenosyl-L-homocysteine + H(+). In terms of biological role, methylates CpG residues. Preferentially methylates hemimethylated DNA. Associates with DNA replication sites in S phase maintaining the methylation pattern in the newly synthesized strand, that is essential for epigenetic inheritance. Associates with chromatin during G2 and M phases to maintain DNA methylation independently of replication. It is responsible for maintaining methylation patterns established in development. DNA methylation is coordinated with methylation of histones. Mediates transcriptional repression by direct binding to HDAC2. In association with DNMT3B and via the recruitment of CTCFL/BORIS, involved in activation of BAG1 gene expression by modulating dimethylation of promoter histone H3 at H3K4 and H3K9. Probably forms a corepressor complex required for activated KRAS-mediated promoter hypermethylation and transcriptional silencing of tumor suppressor genes (TSGs) or other tumor-related genes in colorectal cancer (CRC) cells. Also required to maintain a transcriptionally repressive state of genes in undifferentiated embryonic stem cells (ESCs). Associates at promoter regions of tumor suppressor genes (TSGs) leading to their gene silencing. Promotes tumor growth. The polypeptide is DNA (cytosine-5)-methyltransferase 1 (Dnmt1) (Rattus norvegicus (Rat)).